The primary structure comprises 223 residues: Peroxynitrite isomerase 1 (223 aa).

Residues 69 to 75 (GVWRGEG) carry the GXWXGXG motif. Positions 186 and 213 each coordinate heme b.

Belongs to the nitrobindin family. In terms of assembly, homodimer. The cofactor is heme b.

The catalysed reaction is peroxynitrite = nitrate. The protein operates within nitrogen metabolism. Heme-binding protein able to scavenge peroxynitrite and to protect free L-tyrosine against peroxynitrite-mediated nitration, by acting as a peroxynitrite isomerase that converts peroxynitrite to nitrate. Therefore, this protein likely plays a role in peroxynitrite sensing and in the detoxification of reactive nitrogen and oxygen species (RNS and ROS, respectively). Is able to bind nitric oxide (NO) in vitro, but may act as a sensor of peroxynitrite levels in vivo. The chain is Peroxynitrite isomerase 1 from Mycobacterium marinum (strain ATCC BAA-535 / M).